The sequence spans 314 residues: Probable cell division protein WhiA (314 aa).

Positions 274-308 (SLKELGEMVSTGTISKSGVNHRLRKLNELADKIRS) form a DNA-binding region, H-T-H motif.

This sequence belongs to the WhiA family.

In terms of biological role, involved in cell division and chromosome segregation. The protein is Probable cell division protein WhiA of Staphylococcus carnosus (strain TM300).